Consider the following 154-residue polypeptide: Lipoprotein signal peptidase (154 aa).

Helical transmembrane passes span 55–75 (GHMWFFYLITVIVIGIIIYIM) and 84–104 (LFSISLAFILGGAIGNFIDRV). Active-site residues include D111 and D129. Residues 124–144 (IFNVADASLSVGVVLMLVYVF) traverse the membrane as a helical segment.

Belongs to the peptidase A8 family.

It is found in the cell membrane. The catalysed reaction is Release of signal peptides from bacterial membrane prolipoproteins. Hydrolyzes -Xaa-Yaa-Zaa-|-(S,diacylglyceryl)Cys-, in which Xaa is hydrophobic (preferably Leu), and Yaa (Ala or Ser) and Zaa (Gly or Ala) have small, neutral side chains.. It functions in the pathway protein modification; lipoprotein biosynthesis (signal peptide cleavage). In terms of biological role, this protein specifically catalyzes the removal of signal peptides from prolipoproteins. This chain is Lipoprotein signal peptidase, found in Listeria welshimeri serovar 6b (strain ATCC 35897 / DSM 20650 / CCUG 15529 / CIP 8149 / NCTC 11857 / SLCC 5334 / V8).